Reading from the N-terminus, the 61-residue chain is MEVIEVVYEDGVFKPLKKIKLKEGTRGVVVVRLPKQISEIAKKYRIKVREDVLEEFLEERR.

The protein belongs to the UPF0165 family.

Possibly the antitoxin component of a type II toxin-antitoxin (TA) system. In Pyrococcus abyssi (strain GE5 / Orsay), this protein is Putative antitoxin PYRAB11980.